The sequence spans 482 residues: Malvidin galactosylase UGT88C3 (482 aa).

Catalysis depends on H16, which acts as the Proton acceptor. D117 acts as the Charge relay in catalysis. UDP-binding residues include S279, W345, A349, H366, N370, S371, and E374.

Belongs to the UDP-glycosyltransferase family.

It is found in the endoplasmic reticulum. The protein resides in the nucleus. It catalyses the reaction malvidin + UDP-alpha-D-galactose = malvidin 3-O-beta-D-galactoside + UDP + H(+). It participates in pigment biosynthesis; anthocyanin biosynthesis. UDP-glycosyltransferase which uses UDP-galactose and malvidin as substrates to catalyze the biosynthesis of malvidin 3-O-galactoside, an anthocyanin conferring purple pigmentation. The protein is Malvidin galactosylase UGT88C3 of Oryza sativa subsp. indica (Rice).